Here is a 508-residue protein sequence, read N- to C-terminus: Putative adenosylhomocysteinase 3 (508 aa).

The residue at position 4 (Ser4) is a Phosphoserine. The interval Asp24–Ser81 is disordered. Residues Arg32–Leu41 show a composition bias toward basic residues. A compositionally biased stretch (low complexity) spans Ser42–Asp61. Residues Ser46, Ser49, Ser52, and Ser55 each carry the phosphoserine modification. Substrate is bound by residues Thr133, Asp207, and Glu232. Ser233–Thr235 serves as a coordination point for NAD(+). Positions 262 and 266 each coordinate substrate. Residues Asn267, Gly298–Gly303, Glu319, Asn354, Ile375–His377, and Asn422 contribute to the NAD(+) site.

Belongs to the adenosylhomocysteinase family. In terms of assembly, homotetramer. Forms heteromultimers with AHCYL1 (via the C-terminal region). Interacts with ITPR1; with lower affinity than AHCYL1 and maybe via ITPR1. Interacts with SLC4A4. Interacts with ZCCHC4. The cofactor is NAD(+).

It is found in the cytoplasm. It localises to the microsome. It carries out the reaction S-adenosyl-L-homocysteine + H2O = L-homocysteine + adenosine. It participates in amino-acid biosynthesis; L-homocysteine biosynthesis; L-homocysteine from S-adenosyl-L-homocysteine: step 1/1. Functionally, may regulate the electrogenic sodium/bicarbonate cotransporter SLC4A4 activity and Mg(2+)-sensitivity. On the contrary of its homolog AHCYL1, does not regulate ITPR1 sensitivity to inositol 1,4,5-trisphosphate. In Pongo abelii (Sumatran orangutan), this protein is Putative adenosylhomocysteinase 3 (AHCYL2).